Here is a 601-residue protein sequence, read N- to C-terminus: Serine/threonine-protein phosphatase 2A 65 kDa regulatory subunit A beta isoform (601 aa).

Position 2 is an N-acetylalanine (Ala-2). HEAT repeat units follow at residues 20–58, 59–96, 97–135, 136–173, 174–212, 213–251, 252–290, 291–333, 334–372, 373–411, 412–450, 451–489, 490–528, 529–567, and 568–601; these read DSLYPIAVLIDELRNEDVQLRLNSIKKLSTIALALGVER, TRTELLPFLTDTIYDEDEVLLALAEQLGNFTGLVGGPD, FAHCLLPPLESLATVEETVVRDKAVESLRQISQEHTPVA, LEAHFVPLVKRLASGDWFTSRTSACGLFSVCYPRASNA, VKAEIRQHFRSLCSDDTPMVRRAAASKLGEFAKVLELDS, VKTEIVPLFTNLASDEQDSVRLLAVEACVSIAQLLSQDD, LEALVMPTLRQAAEDKSWRVRYMVADKFSELQKAVGPKI, ALSD…RETV, IMNQILPYIKELVSDTNQHVKSALASVIMGLSTVLGKEN, TIEHLLPLFLAQLKDECPEVRLNIISNLDCVNEVIGIRQ, LSQSLLPAIVELAEDAKWRVRLAIIEYMPLLAGQLGVEF, FDEKLNSLCMAWLVDHVYAIREAATNNLMKLVQKFGTEW, AQNTIVPKVLVMANDPNYLHRMTTLFCINALSEACGKEI, TTKQMLPIVLKMAGDQVANVRFNVAKSLQKIGPILDTNA, and LQGEVKPVLQKLGQDEDMDVKYFAQEAISVLALA.

Belongs to the phosphatase 2A regulatory subunit A family. PP2A consists of a common heterodimeric core enzyme, composed of a 36 kDa catalytic subunit (subunit C) and a 65 kDa constant regulatory subunit (PR65 or subunit A), that associates with a variety of regulatory subunits. Proteins that associate with the core dimer include three families of regulatory subunits B (the R2/B/PR55/B55, R3/B''/PR72/PR130/PR59 and R5/B'/B56 families), the 48 kDa variable regulatory subunit, viral proteins, and cell signaling molecules. Interacts with IPO9. Interacts with SGO1. Interacts with RAF1.

Functionally, the PR65 subunit of protein phosphatase 2A serves as a scaffolding molecule to coordinate the assembly of the catalytic subunit and a variable regulatory B subunit. This is Serine/threonine-protein phosphatase 2A 65 kDa regulatory subunit A beta isoform (Ppp2r1b) from Rattus norvegicus (Rat).